The sequence spans 112 residues: Large ribosomal subunit protein uL24 (112 aa).

The protein belongs to the universal ribosomal protein uL24 family. As to quaternary structure, part of the 50S ribosomal subunit.

Functionally, one of two assembly initiator proteins, it binds directly to the 5'-end of the 23S rRNA, where it nucleates assembly of the 50S subunit. Its function is as follows. One of the proteins that surrounds the polypeptide exit tunnel on the outside of the subunit. The chain is Large ribosomal subunit protein uL24 from Desulfitobacterium hafniense (strain Y51).